Reading from the N-terminus, the 505-residue chain is Flagellin (505 aa).

The protein belongs to the bacterial flagellin family.

The protein localises to the secreted. It localises to the bacterial flagellum. Flagellin is the subunit protein which polymerizes to form the filaments of bacterial flagella. This chain is Flagellin (fliC), found in Salmonella budapest.